The primary structure comprises 696 residues: Interleukin-1 receptor accessory protein-like 1 (696 aa).

The N-terminal stretch at 1 to 24 (MKAPIPHLILLYATFTQSLKVVTK) is a signal peptide. The region spanning 25–134 (RGSADGCTDW…YCMKVSISLT (110 aa)) is the Ig-like C2-type 1 domain. Over 25-357 (RGSADGCTDW…LLHKRELMYT (333 aa)) the chain is Extracellular. 2 disulfide bridges follow: Cys-31-Cys-126 and Cys-53-Cys-118. Residues Asn-63, Asn-122, and Asn-138 are each glycosylated (N-linked (GlcNAc...) asparagine). 2 disulfide bridges follow: Cys-143-Cys-185 and Cys-164-Cys-216. Ig-like C2-type domains are found at residues 143-232 (CYNS…TELT) and 242-350 (PKLL…VLLH). 3 N-linked (GlcNAc...) asparagine glycosylation sites follow: Asn-213, Asn-264, and Asn-331. A disulfide bridge links Cys-267 with Cys-334. The helical transmembrane segment at 358 to 378 (VELAGGLGAILLLLVCSVTIY) threads the bilayer. Over 379-696 (KCYKIEIMLF…RETSISSVIW (318 aa)) the chain is Cytoplasmic. Residues 403–559 (KDYDAYLSYT…KFWKRLQYEM (157 aa)) form the TIR domain. Glu-491 is an active-site residue. The interval 549–644 (SKFWKRLQYE…TGTLPLTSIG (96 aa)) is interaction with NCS1. The segment at 659 to 680 (GQRPQTKSSREPNPDEAHTNSA) is disordered. Over residues 666–676 (SSREPNPDEAH) the composition is skewed to basic and acidic residues.

The protein belongs to the interleukin-1 receptor family. As to quaternary structure, homodimer. Interacts (calcium-independent) with NCS1/FREQ. Interacts (via the first immunoglobilin domain) with PTPRD (via the second immunoglobilin domain); this interaction is PTPRD-splicing-dependent and induces pre- and post-synaptic differentiation of neurons and is required for IL1RAPL1-mediated synapse formation.

It localises to the cell membrane. It is found in the cytoplasm. The protein localises to the cell projection. Its subcellular location is the axon. The protein resides in the dendrite. The catalysed reaction is NAD(+) + H2O = ADP-D-ribose + nicotinamide + H(+). Functionally, may regulate secretion and presynaptic differentiation through inhibition of the activity of N-type voltage-gated calcium channel. May activate the MAP kinase JNK. Plays a role in neurite outgrowth. During dendritic spine formation can bidirectionally induce pre- and post-synaptic differentiation of neurons by trans-synaptically binding to PTPRD. The polypeptide is Interleukin-1 receptor accessory protein-like 1 (Il1rapl1) (Rattus norvegicus (Rat)).